A 150-amino-acid chain; its full sequence is 3-dehydroquinate dehydratase (150 aa).

Catalysis depends on Tyr-22, which acts as the Proton acceptor. Residues Asn-73, His-79, and Asp-86 each coordinate substrate. The active-site Proton donor is the His-99. Substrate is bound by residues Leu-100 to Ser-101 and Arg-110.

Belongs to the type-II 3-dehydroquinase family. In terms of assembly, homododecamer.

The catalysed reaction is 3-dehydroquinate = 3-dehydroshikimate + H2O. It functions in the pathway metabolic intermediate biosynthesis; chorismate biosynthesis; chorismate from D-erythrose 4-phosphate and phosphoenolpyruvate: step 3/7. Its function is as follows. Catalyzes a trans-dehydration via an enolate intermediate. The polypeptide is 3-dehydroquinate dehydratase (Dinoroseobacter shibae (strain DSM 16493 / NCIMB 14021 / DFL 12)).